A 323-amino-acid chain; its full sequence is tRNA-modifying protein YgfZ (323 aa).

Folate contacts are provided by W29 and W182.

The protein belongs to the tRNA-modifying YgfZ family.

The protein localises to the cytoplasm. Functionally, folate-binding protein involved in regulating the level of ATP-DnaA and in the modification of some tRNAs. It is probably a key factor in regulatory networks that act via tRNA modification, such as initiation of chromosomal replication. The chain is tRNA-modifying protein YgfZ from Vibrio atlanticus (strain LGP32) (Vibrio splendidus (strain Mel32)).